The chain runs to 104 residues: Large ribosomal subunit protein uL23 (104 aa).

This sequence belongs to the universal ribosomal protein uL23 family. In terms of assembly, part of the 50S ribosomal subunit. Contacts protein L29, and trigger factor when it is bound to the ribosome.

One of the early assembly proteins it binds 23S rRNA. One of the proteins that surrounds the polypeptide exit tunnel on the outside of the ribosome. Forms the main docking site for trigger factor binding to the ribosome. This is Large ribosomal subunit protein uL23 from Neisseria meningitidis serogroup B (strain ATCC BAA-335 / MC58).